Here is an 80-residue protein sequence, read N- to C-terminus: U1-nemetoxin-Csp1a (80 aa).

An N-terminal signal peptide occupies residues 1–20 (MKYFVVFCVLIIAVAAFTSA). Residues 21 to 41 (AEDGEVFEENPLEFPKTIQKR) constitute a propeptide that is removed on maturation. 4 cysteine pairs are disulfide-bonded: C42–C56, C49–C60, C55–C77, and C66–C73.

It belongs to the neurotoxin 13 (insecticidal toxin ABC) family. 02 (Calisoga) subfamily. As to expression, expressed by the venom gland.

Its subcellular location is the secreted. Its function is as follows. Causes paralysis to insect larvae (H.virescens). This toxin is active only on insects. In Calisoga sp. (Spider), this protein is U1-nemetoxin-Csp1a.